The primary structure comprises 336 residues: uncharacterized protein (336 aa).

This sequence to bacterial alkanal monooxygenase alpha and beta chains.

This is an uncharacterized protein from Bacillus subtilis (strain 168).